Reading from the N-terminus, the 333-residue chain is Cathepsin M (333 aa).

An N-terminal signal peptide occupies residues 1-15 (MTSAIFLAMLCLGMA). Residues 16–113 (LPSPAPDPIL…KSVQKRLSVN (98 aa)) constitute a propeptide, activation peptide. 2 disulfides stabilise this stretch: Cys-135-Cys-178 and Cys-169-Cys-211. Cys-138 is a catalytic residue. N-linked (GlcNAc...) asparagine glycosylation is found at Asn-217, Asn-221, and Asn-268. Residues Cys-269 and Cys-322 are joined by a disulfide bond. Residues His-276 and Asn-300 contribute to the active site.

Belongs to the peptidase C1 family. As to expression, placenta.

The protein localises to the lysosome. This Mus musculus (Mouse) protein is Cathepsin M (Ctsm).